A 132-amino-acid chain; its full sequence is Histone H2A.1 (132 aa).

This sequence belongs to the histone H2A family. As to quaternary structure, the nucleosome is a histone octamer containing two molecules each of H2A, H2B, H3 and H4 assembled in one H3-H4 heterotetramer and two H2A-H2B heterodimers. The octamer wraps approximately 147 bp of DNA.

It is found in the nucleus. The protein resides in the chromosome. Core component of nucleosome. Nucleosomes wrap and compact DNA into chromatin, limiting DNA accessibility to the cellular machineries which require DNA as a template. Histones thereby play a central role in transcription regulation, DNA repair, DNA replication and chromosomal stability. DNA accessibility is regulated via a complex set of post-translational modifications of histones, also called histone code, and nucleosome remodeling. The polypeptide is Histone H2A.1 (Leishmania infantum).